A 241-amino-acid polypeptide reads, in one-letter code: MSMLFYTLITAFLIGVQAEPYTDSNVPEGDSVPEAHWTKLQHSLDTALRRARSAPAEPIAARVTGQTRNITVDPKLFKKRRLRSPRVLFSTQPPPTSSDTLDLDFQAHGTISFNRTHRSKRSSTHPVFHMGEFSVCDSVSVWVGDKTTATDIKGKEVTVLGEVNINNSVFKQYFFETKCRAPNPVESGCRGIDSKHWNSYCTTTHTFVKALTTDDKQAAWRFIRIDTACVCVLSRKAARRG.

A signal peptide spans 1 to 18 (MSMLFYTLITAFLIGVQA). Residues 19 to 121 (EPYTDSNVPE…SFNRTHRSKR (103 aa)) constitute a propeptide that is removed on maturation. Asn69, Asn114, and Asn166 each carry an N-linked (GlcNAc...) asparagine glycan. Cystine bridges form between Cys136–Cys201, Cys179–Cys229, and Cys189–Cys231. Positions 173 and 209 each coordinate a 1-acyl-sn-glycero-3-phospho-(1D-myo-inositol). Residue Lys209 coordinates a 1-acyl-sn-glycero-3-phospho-L-serine.

Belongs to the NGF-beta family. Homodimer. The homodimer interacts with a single NTRK1 chain. The homodimer interacts with a single NGFR chain. The NGF dimer interacts with a single SORCS2 chain (via extracellular domain). The NGF precursor (proNGF) binds to a receptor complex formed by SORT1 and NGFR, which leads to NGF endocytosis. Both mature NGF and the immature NGF precursor (proNGF) interact with SORCS2 and with the heterodimer formed by SORCS2 and NGFR (via extracellular domains). The NGF precursor (proNGF) has much higher affinity for SORCS2 than mature NGF. The NGF precursor (proNGF) has much higher affinity for SORT1 than mature NGF. Interacts with ADAM10 in a divalent cation-dependent manner. Interacts with SORCS3. In terms of tissue distribution, detected in the granule and pyramidal cell layer in the hippocampus.

It is found in the secreted. Its subcellular location is the endosome lumen. Its function is as follows. Nerve growth factor is important for the development and maintenance of the sympathetic and sensory nervous systems. Extracellular ligand for the NTRK1 and NGFR receptors, activates cellular signaling cascades to regulate neuronal proliferation, differentiation and survival. The immature NGF precursor (proNGF) functions as a ligand for the heterodimeric receptor formed by SORCS2 and NGFR, and activates cellular signaling cascades that lead to inactivation of RAC1 and/or RAC2, reorganization of the actin cytoskeleton and neuronal growth cone collapse. In contrast to mature NGF, the precursor form (proNGF) promotes neuronal apoptosis (in vitro). Inhibits metalloproteinase-dependent proteolysis of platelet glycoprotein VI. Binds lysophosphatidylinositol and lysophosphatidylserine between the two chains of the homodimer. The lipid-bound form promotes histamine relase from mast cells, contrary to the lipid-free form. The protein is Beta-nerve growth factor (Ngf) of Rattus norvegicus (Rat).